Reading from the N-terminus, the 116-residue chain is SPbeta prophage-derived uncharacterized protein YomQ (116 aa).

The sequence is that of SPbeta prophage-derived uncharacterized protein YomQ (yomQ) from Bacillus subtilis (strain 168).